Consider the following 339-residue polypeptide: Large ribosomal subunit protein uL10 (339 aa).

The interval 300–339 is disordered; sequence AAAQATPSVEEREEEEKPEEEEEEEEKEEEAIEGLGALFG. A compositionally biased stretch (acidic residues) spans 310-331; the sequence is EREEEEKPEEEEEEEEKEEEAI.

It belongs to the universal ribosomal protein uL10 family. As to quaternary structure, part of the 50S ribosomal subunit. Forms part of the ribosomal stalk which helps the ribosome interact with GTP-bound translation factors. Forms a heptameric L10(L12)2(L12)2(L12)2 complex, where L10 forms an elongated spine to which the L12 dimers bind in a sequential fashion.

Forms part of the ribosomal stalk, playing a central role in the interaction of the ribosome with GTP-bound translation factors. The chain is Large ribosomal subunit protein uL10 from Archaeoglobus fulgidus (strain ATCC 49558 / DSM 4304 / JCM 9628 / NBRC 100126 / VC-16).